A 444-amino-acid polypeptide reads, in one-letter code: Putative cytochrome P450 120 (444 aa).

Cys391 provides a ligand contact to heme.

The protein belongs to the cytochrome P450 family. Heme serves as cofactor.

The polypeptide is Putative cytochrome P450 120 (cyp120) (Synechocystis sp. (strain ATCC 27184 / PCC 6803 / Kazusa)).